A 105-amino-acid chain; its full sequence is Gastrin/cholecystokinin-like peptide (105 aa).

A signal peptide spans 1 to 20 (MKTKVFLGLILSAAVTACLC). The propeptide occupies 21 to 38 (RPAAKAPGGSHRPTSSLA). Positions 24 to 51 (AKAPGGSHRPTSSLARRDWPEPPSQEQQ) are disordered. Tyr-87 carries the sulfotyrosine modification. Phe-93 bears the Phenylalanine amide mark. Residues 97-105 (STEDAADAA) constitute a propeptide that is removed on maturation.

It belongs to the gastrin/cholecystokinin family.

The protein resides in the secreted. In terms of biological role, potent stimulus of gastric acid, but not of pancreatic secretion. This is Gastrin/cholecystokinin-like peptide from Gallus gallus (Chicken).